Consider the following 230-residue polypeptide: 7-cyano-7-deazaguanine synthase (230 aa).

14 to 24 (LSGGLDSTTTL) is an ATP binding site. Residues Cys194, Cys204, Cys207, and Cys210 each contribute to the Zn(2+) site.

Belongs to the QueC family. Zn(2+) is required as a cofactor.

The catalysed reaction is 7-carboxy-7-deazaguanine + NH4(+) + ATP = 7-cyano-7-deazaguanine + ADP + phosphate + H2O + H(+). It functions in the pathway purine metabolism; 7-cyano-7-deazaguanine biosynthesis. In terms of biological role, catalyzes the ATP-dependent conversion of 7-carboxy-7-deazaguanine (CDG) to 7-cyano-7-deazaguanine (preQ(0)). This Vesicomyosocius okutanii subsp. Calyptogena okutanii (strain HA) protein is 7-cyano-7-deazaguanine synthase.